The chain runs to 365 residues: Alanine racemase (365 aa).

Lysine 35 acts as the Proton acceptor; specific for D-alanine in catalysis. The residue at position 35 (lysine 35) is an N6-(pyridoxal phosphate)lysine. Arginine 130 is a substrate binding site. The active-site Proton acceptor; specific for L-alanine is tyrosine 256. Methionine 304 contacts substrate.

This sequence belongs to the alanine racemase family. It depends on pyridoxal 5'-phosphate as a cofactor.

The enzyme catalyses L-alanine = D-alanine. It participates in amino-acid biosynthesis; D-alanine biosynthesis; D-alanine from L-alanine: step 1/1. Catalyzes the interconversion of L-alanine and D-alanine. May also act on other amino acids. This Acidovorax ebreus (strain TPSY) (Diaphorobacter sp. (strain TPSY)) protein is Alanine racemase (alr).